Reading from the N-terminus, the 447-residue chain is Argininosuccinate synthase (447 aa).

Residues 17–25 (AFSGGLDTS) and A43 each bind ATP. Y99 contacts L-citrulline. Positions 129 and 131 each coordinate ATP. Positions 131, 135, and 136 each coordinate L-aspartate. Position 135 (N135) interacts with L-citrulline. ATP is bound at residue D136. L-citrulline-binding residues include R139 and S192. D194 is an ATP binding site. L-citrulline contacts are provided by T201, E203, and E280.

It belongs to the argininosuccinate synthase family. Type 2 subfamily. As to quaternary structure, homotetramer.

The protein resides in the cytoplasm. The catalysed reaction is L-citrulline + L-aspartate + ATP = 2-(N(omega)-L-arginino)succinate + AMP + diphosphate + H(+). It functions in the pathway amino-acid biosynthesis; L-arginine biosynthesis; L-arginine from L-ornithine and carbamoyl phosphate: step 2/3. This Shigella flexneri serotype 5b (strain 8401) protein is Argininosuccinate synthase.